Consider the following 336-residue polypeptide: Casein kinase I isoform beta (336 aa).

Residues 17–285 (YKLVREIGFG…YLRQLFRLLF (269 aa)) form the Protein kinase domain. ATP is bound by residues 23-31 (IGFGSFGHV) and Lys46. Asp136 serves as the catalytic Proton acceptor. The span at 309–320 (ASSSSGEGQQAQ) shows a compositional bias: low complexity. The segment at 309–336 (ASSSSGEGQQAQTPTGKSDNTKSEMKHS) is disordered. Positions 327–336 (DNTKSEMKHS) are enriched in basic and acidic residues.

The protein belongs to the protein kinase superfamily. CK1 Ser/Thr protein kinase family. Casein kinase I subfamily. As to quaternary structure, monomer.

The protein localises to the cytoplasm. The catalysed reaction is L-seryl-[protein] + ATP = O-phospho-L-seryl-[protein] + ADP + H(+). The enzyme catalyses L-threonyl-[protein] + ATP = O-phospho-L-threonyl-[protein] + ADP + H(+). In terms of biological role, casein kinases are operationally defined by their preferential utilization of acidic proteins such as caseins as substrates. It can phosphorylate a large number of proteins. Participates in Wnt signaling. The protein is Casein kinase I isoform beta (CSNK1B) of Bos taurus (Bovine).